Here is a 112-residue protein sequence, read N- to C-terminus: Putative pterin-4-alpha-carbinolamine dehydratase (112 aa).

Belongs to the pterin-4-alpha-carbinolamine dehydratase family.

The catalysed reaction is (4aS,6R)-4a-hydroxy-L-erythro-5,6,7,8-tetrahydrobiopterin = (6R)-L-erythro-6,7-dihydrobiopterin + H2O. The sequence is that of Putative pterin-4-alpha-carbinolamine dehydratase from Vibrio campbellii (strain ATCC BAA-1116).